Reading from the N-terminus, the 269-residue chain is Phycobilisome 37.5 kDa linker polypeptide, phycocyanin-associated, rod (269 aa).

One can recognise a PBS-linker domain in the interval 2–177 (TSSTAARQLG…IYRGYANSDR (176 aa)). The region spanning 217–269 (GQLYRVRVIQADRGRTTQIRRSIQEYLVSYDQLSPTLQRLNQRGSRVVNISPA) is the CpcD-like domain.

Belongs to the phycobilisome linker protein family.

The protein localises to the cellular thylakoid membrane. In terms of biological role, rod linker protein, associated with phycocyanin. Linker polypeptides determine the state of aggregation and the location of the disk-shaped phycobiliprotein units within the phycobilisome and modulate their spectroscopic properties in order to mediate a directed and optimal energy transfer. This chain is Phycobilisome 37.5 kDa linker polypeptide, phycocyanin-associated, rod (cpcH2), found in Microchaete diplosiphon (Fremyella diplosiphon).